Here is a 334-residue protein sequence, read N- to C-terminus: uncharacterized protein (334 aa).

5 WD repeats span residues 56–86, 98–128, 139–169, 220–250, and 262–291; these read LKGE…KLWT, KPVA…RIWD, GHTS…EGWS, TDQG…RVFN, and LDDG…RVWN.

This is an uncharacterized protein from Synechocystis sp. (strain ATCC 27184 / PCC 6803 / Kazusa).